The chain runs to 543 residues: Cysteine/serine-rich nuclear protein 2 (543 aa).

M1 bears the N-acetylmethionine mark. 3 disordered regions span residues 1 to 51, 281 to 305, and 488 to 543; these read MDAF…SFTP, KRQVSRPAAPDEEPSPTASCSLTGA, and DCNP…PLAV. Residues 31–40 show a composition bias toward low complexity; the sequence is SSDSADSCDS. Polar residues-rich tracts occupy residues 42-51 and 296-305; these read NPPTTASFTP and PTASCSLTGA.

It belongs to the AXUD1 family.

Its subcellular location is the nucleus. Functionally, binds to the consensus sequence 5'-AGAGTG-3' and has transcriptional activator activity. May play a role in apoptosis. The chain is Cysteine/serine-rich nuclear protein 2 (CSRNP2) from Homo sapiens (Human).